The following is a 416-amino-acid chain: RNA-editing ligase 2, mitochondrial (416 aa).

A mitochondrion-targeting transit peptide spans 1–17; that stretch reads MLRRLGVRHFRRTPLLF. ATP is bound by residues 29–31, 56–62, Arg79, Glu126, Phe173, and 269–271; these read TEI, EKVHGAN, and KFK. The N6-AMP-lysine intermediate role is filled by Lys57.

This sequence belongs to the RNA ligase 2 family. As to quaternary structure, component of the RNA editing complex, a 1600 kDa complex composed of at least 20 proteins.

It localises to the mitochondrion. It catalyses the reaction ATP + (ribonucleotide)n-3'-hydroxyl + 5'-phospho-(ribonucleotide)m = (ribonucleotide)n+m + AMP + diphosphate.. Functionally, RNA editing in kinetoplastid mitochondria inserts and deletes uridylates at multiple sites in pre-mRNAs as directed by guide RNAs. This chain is RNA-editing ligase 2, mitochondrial (REL2), found in Trypanosoma brucei brucei (strain 927/4 GUTat10.1).